A 339-amino-acid chain; its full sequence is Deubiquitinase and deneddylase Dub2 (339 aa).

Residues 36–56 (IIIALFLIVISCGLILCAYTF) traverse the membrane as a helical segment. Catalysis depends on residues His-203, Asp-220, and Cys-282.

Belongs to the peptidase C48 family.

Its subcellular location is the secreted. It localises to the host cell. It is found in the membrane. Effector proteins function to alter host cell physiology and promote bacterial survival in host tissues. This protease possesses deubiquitinating and deneddylating activities. This is Deubiquitinase and deneddylase Dub2 (cdu2) from Chlamydia trachomatis serovar A (strain ATCC VR-571B / DSM 19440 / HAR-13).